The primary structure comprises 430 residues: Functional amyloid transporter FapF (430 aa).

The signal sequence occupies residues 1–24 (MHRSLSLRAVVCLSTLLPASLLYA). At 25–131 (APDVDIETLK…EASGFFGNGK (107 aa)) the chain is on the periplasmic side. Positions 29–64 (DIETLKQELLELKQRYEAQQKALAVLEQRVRQVEDQ) form a coiled coil. The interval 62-114 (EDQPATPAPKRLAKSPADFKQSGSTVAASSGTGGATGGSSYGQSLKDDSEPAQ) is disordered. Residues 92–101 (GTGGATGGSS) show a composition bias toward gly residues. The segment at 113-125 (AQSVSNLYNEASG) is alpha helical plug. The beta stranded transmembrane segment at 132 to 142 (FSFETGITYAR) threads the bilayer. Topologically, residues 143 to 172 (YDARQLTLNGFLALDSIFLGNINLDRIKAD) are extracellular. Residues 173-183 (NWTLDLTGRYN) form a beta stranded membrane-spanning segment. Topologically, residues 184 to 189 (LDNRWQ) are periplasmic. The beta stranded transmembrane segment at 190–198 (FDVNVPVVY) threads the bilayer. Residues 199–224 (RESTYQSGGASGGDPQATSEESVSRD) lie on the Extracellular side of the membrane. The tract at residues 203–223 (YQSGGASGGDPQATSEESVSR) is disordered. A beta stranded transmembrane segment spans residues 225-238 (PTIGDVNFGIAYKF). Residues 239–246 (LDESATMP) lie on the Periplasmic side of the membrane. The chain crosses the membrane as a beta stranded span at residues 247–256 (DAVVSVRVKA). The Extracellular portion of the chain corresponds to 257–288 (PTGKEPFGIKLVRSTANDNLYVPESLPTGNGV). Residues 289-298 (WSITPGLSLV) form a beta stranded membrane-spanning segment. At 299 to 304 (KTFDPA) the chain is on the periplasmic side. Residues 305 to 314 (VLFGSVSYTH) traverse the membrane as a beta stranded segment. At 315 to 339 (NLEDSFDDISSDVNQKVGGKVRLGD) the chain is on the extracellular side. Residues 340-348 (SFQFGVGVA) form a beta stranded membrane-spanning segment. Residues 349–356 (FALNERMS) lie on the Periplasmic side of the membrane. Residues 357–365 (MSFSVSDLI) traverse the membrane as a beta stranded segment. The Extracellular segment spans residues 366–386 (QRKSKLKPDGGGWQSIVSSDA). Residues 387-397 (NAGYFNVGMTI) traverse the membrane as a beta stranded segment. Residues 398–404 (AASENLT) are Periplasmic-facing. Residues 405 to 412 (IVPNLAIG) traverse the membrane as a beta stranded segment. Over 413–419 (MTDDAPD) the chain is Extracellular. A beta stranded transmembrane segment spans residues 420 to 428 (FTFSLKFPY). The Periplasmic portion of the chain corresponds to 429-430 (YF).

Belongs to the amyloid transporter (TC 9.B.153) family. Homotrimer.

It is found in the cell outer membrane. Functionally, transports fibril components across the outer membrane. Upon overexpression of the endogenous six-gene locus (fapA-fapF) in situ cells form large clumps during liquid growth, make large amounts of biofilm and produce amyloid fibrils. Expression of the 6 gene operon in E.coli strain BL21(DE3) induces flocculation and biofilm formation with copious extracellular fibrils. The sequence is that of Functional amyloid transporter FapF from Pseudomonas fluorescens.